Reading from the N-terminus, the 217-residue chain is Proteasome subunit beta type-9 (217 aa).

Residues 1–18 (MLEESSEPGWLSEEVKTG) constitute a propeptide, removed in mature form. The active-site Nucleophile is the threonine 19.

It belongs to the peptidase T1B family. The 26S proteasome consists of a 20S proteasome core and two 19S regulatory subunits. The 20S proteasome core is composed of 28 subunits that are arranged in four stacked rings, resulting in a barrel-shaped structure. The two end rings are each formed by seven alpha subunits, and the two central rings are each formed by seven beta subunits. The catalytic chamber with the active sites is on the inside of the barrel. Component of the immunoproteasome, where it displaces the equivalent housekeeping subunit PSMB6. In terms of processing, autocleaved. The resulting N-terminal Thr residue of the mature subunit is responsible for the nucleophile proteolytic activity.

It localises to the cytoplasm. It is found in the nucleus. It catalyses the reaction Cleavage of peptide bonds with very broad specificity.. Its function is as follows. The proteasome is a multicatalytic proteinase complex which is characterized by its ability to cleave peptides with Arg, Phe, Tyr, Leu, and Glu adjacent to the leaving group at neutral or slightly basic pH. The proteasome has an ATP-dependent proteolytic activity. This subunit is involved in antigen processing to generate class I binding peptides. The chain is Proteasome subunit beta type-9 (psmb9-a) from Salmo salar (Atlantic salmon).